The primary structure comprises 183 residues: NADH-quinone oxidoreductase subunit A (183 aa).

3 helical membrane passes run Ile11–Leu31, Phe63–Trp83, and Met98–Leu118. The segment at Gly160 to Glu183 is disordered. A compositionally biased stretch (polar residues) spans Ala164 to Glu183.

This sequence belongs to the complex I subunit 3 family. As to quaternary structure, NDH-1 is composed of 14 different subunits. Subunits NuoA, H, J, K, L, M, N constitute the membrane sector of the complex.

It localises to the cell inner membrane. It carries out the reaction a quinone + NADH + 5 H(+)(in) = a quinol + NAD(+) + 4 H(+)(out). Its function is as follows. NDH-1 shuttles electrons from NADH, via FMN and iron-sulfur (Fe-S) centers, to quinones in the respiratory chain. The immediate electron acceptor for the enzyme in this species is believed to be ubiquinone. Couples the redox reaction to proton translocation (for every two electrons transferred, four hydrogen ions are translocated across the cytoplasmic membrane), and thus conserves the redox energy in a proton gradient. This chain is NADH-quinone oxidoreductase subunit A, found in Acinetobacter baylyi (strain ATCC 33305 / BD413 / ADP1).